The chain runs to 100 residues: Aspartyl/glutamyl-tRNA(Asn/Gln) amidotransferase subunit C (100 aa).

This sequence belongs to the GatC family. In terms of assembly, heterotrimer of A, B and C subunits.

It catalyses the reaction L-glutamyl-tRNA(Gln) + L-glutamine + ATP + H2O = L-glutaminyl-tRNA(Gln) + L-glutamate + ADP + phosphate + H(+). The enzyme catalyses L-aspartyl-tRNA(Asn) + L-glutamine + ATP + H2O = L-asparaginyl-tRNA(Asn) + L-glutamate + ADP + phosphate + 2 H(+). In terms of biological role, allows the formation of correctly charged Asn-tRNA(Asn) or Gln-tRNA(Gln) through the transamidation of misacylated Asp-tRNA(Asn) or Glu-tRNA(Gln) in organisms which lack either or both of asparaginyl-tRNA or glutaminyl-tRNA synthetases. The reaction takes place in the presence of glutamine and ATP through an activated phospho-Asp-tRNA(Asn) or phospho-Glu-tRNA(Gln). This chain is Aspartyl/glutamyl-tRNA(Asn/Gln) amidotransferase subunit C, found in Janthinobacterium sp. (strain Marseille) (Minibacterium massiliensis).